The chain runs to 178 residues: Large ribosomal subunit protein uL10 (178 aa).

Belongs to the universal ribosomal protein uL10 family. In terms of assembly, part of the ribosomal stalk of the 50S ribosomal subunit. The N-terminus interacts with L11 and the large rRNA to form the base of the stalk. The C-terminus forms an elongated spine to which L12 dimers bind in a sequential fashion forming a multimeric L10(L12)X complex.

In terms of biological role, forms part of the ribosomal stalk, playing a central role in the interaction of the ribosome with GTP-bound translation factors. In Dictyoglomus thermophilum (strain ATCC 35947 / DSM 3960 / H-6-12), this protein is Large ribosomal subunit protein uL10.